Here is a 413-residue protein sequence, read N- to C-terminus: MSTEPSSKPVFPITDEVRHALAVTKRGVDELLVEEEFAQKLARSAATGTPLRIKLGLDPTAPDIHIGHTVVLNKMRQLQDLGHTVIFLIGDFTSLIGDPSGRNATRPPLTREQIESNAKTYFEQAALVLDRDKTEIRYNSEWSMPLGADGMIKLASRYTVARILEREDFTKRFQGGVPISIHEFLYPLMQGYDSVALNADLELGGTDQKFNLLVGRELQKQYGQEQQCILTMPLLEGLDGVEKMSKSKGNYVGISEQPTDMFGKLMSISDTLMWRYFELLSFRPMDEIGGFKREIEGGRNPRDFKVLLAQEIVARFHSQADAERALEDFNHRAKGGVPDDIPSVTLAGAPLAIGQLLKQAGLVPSTSEALRNIEQGGVKIDGATVSDKGLKVEAGEFVVQVGKRRFARVTLTA.

A 'HIGH' region motif is present at residues 59-68; sequence PTAPDIHIGH. The 'KMSKS' region signature appears at 243–247; it reads KMSKS. Lysine 246 contributes to the ATP binding site. Positions 351-411 constitute an S4 RNA-binding domain; that stretch reads LAIGQLLKQA…GKRRFARVTL (61 aa).

Belongs to the class-I aminoacyl-tRNA synthetase family. TyrS type 2 subfamily. As to quaternary structure, homodimer.

The protein resides in the cytoplasm. The catalysed reaction is tRNA(Tyr) + L-tyrosine + ATP = L-tyrosyl-tRNA(Tyr) + AMP + diphosphate + H(+). Its function is as follows. Catalyzes the attachment of tyrosine to tRNA(Tyr) in a two-step reaction: tyrosine is first activated by ATP to form Tyr-AMP and then transferred to the acceptor end of tRNA(Tyr). The chain is Tyrosine--tRNA ligase from Burkholderia lata (strain ATCC 17760 / DSM 23089 / LMG 22485 / NCIMB 9086 / R18194 / 383).